Reading from the N-terminus, the 113-residue chain is Large ribosomal subunit protein bL19 (113 aa).

Belongs to the bacterial ribosomal protein bL19 family.

Functionally, this protein is located at the 30S-50S ribosomal subunit interface and may play a role in the structure and function of the aminoacyl-tRNA binding site. This is Large ribosomal subunit protein bL19 from Nocardia farcinica (strain IFM 10152).